The primary structure comprises 124 residues: Fluoride-specific ion channel FluC (124 aa).

Transmembrane regions (helical) follow at residues 1–21 (MAYL…HFIN), 36–56 (TFFI…YLAF), 66–86 (LFLM…SLDA), and 94–114 (AVGL…AGLF). Positions 74 and 77 each coordinate Na(+).

Belongs to the fluoride channel Fluc/FEX (TC 1.A.43) family.

Its subcellular location is the cell inner membrane. It catalyses the reaction fluoride(in) = fluoride(out). Na(+) is not transported, but it plays an essential structural role and its presence is essential for fluoride channel function. Fluoride-specific ion channel. Important for reducing fluoride concentration in the cell, thus reducing its toxicity. This chain is Fluoride-specific ion channel FluC, found in Rhodopseudomonas palustris (strain ATCC BAA-98 / CGA009).